The primary structure comprises 434 residues: Sodium/bile acid cotransporter 5 (434 aa).

Residues 1–18 (MSGNFFIFLLLLVTPGEA) form the signal peptide. Residues 19–129 (KKSFLSFLNI…VRVFRQTDDS (111 aa)) lie on the Extracellular side of the membrane. 2 N-linked (GlcNAc...) asparagine glycosylation sites follow: Asn73 and Asn96. A helical membrane pass occupies residues 130–150 (LLQAPIHVDSSIFLLVLSMIL). Residues 151–172 (LNKCAFGCKIEFQVLQTVWKRP) are Cytoplasmic-facing. A helical membrane pass occupies residues 173–193 (LPILLGVVIQFFLMPFCGFLL). Residues 194-203 (SQILGLPKAQ) lie on the Extracellular side of the membrane. The helical transmembrane segment at 204 to 226 (AFGFVMTCTCPGGGGGYLFALLL) threads the bilayer. The Cytoplasmic segment spans residues 227-232 (EGDVTL). Residues 233 to 255 (AILMTCTSTSLALIMMPVNSYFY) form a helical membrane-spanning segment. The Extracellular segment spans residues 256 to 268 (SRLLGLAGAFHVP). A helical membrane pass occupies residues 269 to 289 (VLKIVSTLLFILMPMSTGVII). At 290–306 (KHKMPAKAICLERVVRP) the chain is on the cytoplasmic side. Residues 307–327 (LSLTLMFVGIYLAFRMGLVFL) traverse the membrane as a helical segment. The Extracellular segment spans residues 328-331 (RMAN). A helical membrane pass occupies residues 332 to 352 (LEVFLLGLLVPALGLLFGYSL). Over 353-365 (AKVYLLPLPVCKT) the chain is Cytoplasmic. The helical transmembrane segment at 366 to 386 (VALETGMLNSFLALAIIQLSF) threads the bilayer. Topologically, residues 387 to 395 (SQPKAHEAS) are extracellular. A helical membrane pass occupies residues 396–416 (VAPFTVAMCSSCEMLLLLLVY). Over 417 to 434 (KAKRRPSLSTEYEKTPLV) the chain is Cytoplasmic.

This sequence belongs to the bile acid:sodium symporter (BASS) (TC 2.A.28) family.

It is found in the membrane. The chain is Sodium/bile acid cotransporter 5 (Slc10a5) from Mus musculus (Mouse).